Here is a 227-residue protein sequence, read N- to C-terminus: Protein FAM3C (227 aa).

The N-terminal stretch at 1-24 (MRVAGAAKLVVAVAVFLLTFYVIS) is a signal peptide. 2 disulfides stabilise this stretch: cysteine 58–cysteine 86 and cysteine 64–cysteine 221. Positions 67–225 (KHFAFKMASG…VEMEGCIPQK (159 aa)) constitute a GG-type lectin domain.

It belongs to the FAM3 family. As to expression, present in most secretory epithelia (at protein level).

The protein localises to the secreted. It is found in the cytoplasmic vesicle. In terms of biological role, may be involved in retinal laminar formation. Promotes epithelial to mesenchymal transition. This chain is Protein FAM3C (FAM3C), found in Homo sapiens (Human).